A 327-amino-acid polypeptide reads, in one-letter code: GMP reductase (327 aa).

C175 functions as the Thioimidate intermediate in the catalytic mechanism. I204 to V227 is an NADP(+) binding site.

It belongs to the IMPDH/GMPR family. GuaC type 2 subfamily.

The enzyme catalyses IMP + NH4(+) + NADP(+) = GMP + NADPH + 2 H(+). Functionally, catalyzes the irreversible NADPH-dependent deamination of GMP to IMP. It functions in the conversion of nucleobase, nucleoside and nucleotide derivatives of G to A nucleotides, and in maintaining the intracellular balance of A and G nucleotides. In Exiguobacterium sp. (strain ATCC BAA-1283 / AT1b), this protein is GMP reductase.